An 88-amino-acid chain; its full sequence is FXYD domain-containing ion transport regulator 4 (88 aa).

Residues 1–20 (MEEITCAFLLLLAGLPALEA) form the signal peptide. Topologically, residues 21-38 (SDPVDKDSPFYYDWESLQ) are extracellular. A helical membrane pass occupies residues 39-59 (LGGLIFGGLLCIAGIAMALSG). The Cytoplasmic segment spans residues 60 to 88 (KCKCRRTHKPSSLPGKATPLIIPGSANTC).

Belongs to the FXYD family. As to quaternary structure, regulatory subunit of the sodium/potassium-transporting ATPase which is composed of a catalytic alpha subunit, a non-catalytic beta subunit and a regulatory subunit. The regulatory subunit, a member of the FXYD protein family, modulates the enzymatic activity in a tissue- and isoform-specific way by changing affinities of the Na+/K+-ATPase toward Na(+), K(+) or ATP.

Its subcellular location is the cell membrane. The protein resides in the basolateral cell membrane. Functionally, associates with and regulates the activity of the sodium/potassium-transporting ATPase (NKA) which catalyzes the hydrolysis of ATP coupled with the exchange of Na(+) and K(+) ions across the plasma membrane. Increases the apparent affinity of the transporter for Na(+) and increases NKA activity. The sequence is that of FXYD domain-containing ion transport regulator 4 (Fxyd4) from Mus musculus (Mouse).